The sequence spans 99 residues: Large ribosomal subunit protein bL27 (99 aa).

Positions 1 to 10 (MKLIFDIQLF) are excised as a propeptide.

The protein belongs to the bacterial ribosomal protein bL27 family. The N-terminus is cleaved by ribosomal processing cysteine protease Prp.

This chain is Large ribosomal subunit protein bL27, found in Caldicellulosiruptor saccharolyticus (strain ATCC 43494 / DSM 8903 / Tp8T 6331).